We begin with the raw amino-acid sequence, 664 residues long: SPARC-like protein 1 (664 aa).

The signal sequence occupies residues 1–16; that stretch reads MKTGLFFLCLLGTAAA. Residues 25–34 form an O-glycosylated at one additional site region; that stretch reads SDHSKPTAET. Residues 28–360 form a disordered region; that stretch reads SKPTAETVAP…DGPRHSASDD (333 aa). 2 O-linked (GalNAc...) threonine glycosylation sites follow: threonine 31 and threonine 40. O-linked (GalNAc...) serine glycosylation is present at serine 44. The segment covering 62–84 has biased composition (basic and acidic residues); it reads DDSHHKAEKSSVLKSKEESHEQS. A phosphoserine mark is found at serine 76, serine 84, and serine 92. A compositionally biased stretch (polar residues) spans 85–94; sequence AEQGKSSSQE. The segment covering 96–105 has biased composition (basic and acidic residues); it reads GLKDQEDSDG. Threonine 116 carries O-linked (GalNAc...) threonine glycosylation. The segment covering 120–136 has biased composition (basic and acidic residues); sequence LDIKEDMSEPQEKKLSE. The segment covering 146-156 has biased composition (polar residues); the sequence is SSFTDSNQQES. Asparagine 169 carries N-linked (GlcNAc...) asparagine glycosylation. Residues 170 to 180 are compositionally biased toward basic residues; it reads YSHHQLNRSSK. Position 171 is a phosphoserine (serine 171). 2 N-linked (GlcNAc...) asparagine glycosylation sites follow: asparagine 176 and asparagine 196. A compositionally biased stretch (polar residues) spans 188 to 199; the sequence is QGNQEQDPNISN. Basic and acidic residues predominate over residues 216 to 235; that stretch reads DNQERKTELPREHANSKQEE. Acidic residues-rich tracts occupy residues 236–248 and 259–280; these read DNTQSDDILEESD and DEFDQGNQEQEDNSNAEMEEEN. The residue at position 272 (serine 272) is a Phosphoserine. Asparagine 280 carries N-linked (GlcNAc...) asparagine glycosylation. A compositionally biased stretch (basic and acidic residues) spans 306-316; sequence SNHKETEEKTV. An O-linked (GalNAc...) threonine glycan is attached at threonine 331. Over residues 339-349 the composition is skewed to acidic residues; it reads DDGDDDGDDGG. Serine 358 and serine 365 each carry phosphoserine. The interval 388–426 is disordered; it reads EKVHENENIGTTEPGEHQEAKKAENSSNEEETSSEGNMR. Threonine 398 carries O-linked (GalNAc...) threonine glycosylation. Residues 401–411 show a composition bias toward basic and acidic residues; the sequence is PGEHQEAKKAE. Asparagine 412 is a glycosylation site (N-linked (GlcNAc...) asparagine). Serine 420 is subject to Phosphoserine. Residues 432–454 form the Follistatin-like domain; sequence SCMSFQCKRGHICKADQQGKPHC. Cystine bridges form between cysteine 433–cysteine 444, cysteine 438–cysteine 454, cysteine 456–cysteine 490, cysteine 462–cysteine 483, cysteine 472–cysteine 509, cysteine 515–cysteine 626, and cysteine 634–cysteine 650. The Kazal-like domain maps to 450–511; sequence GKPHCVCQDP…QLDYFGACKS (62 aa). The N-linked (GlcNAc...) asparagine glycan is linked to asparagine 476. Positions 622 to 657 constitute an EF-hand domain; that stretch reads PMEHCITRFFEECDPNKDKHITLKEWGHCFGIKEED. Ca(2+) contacts are provided by aspartate 635, asparagine 637, aspartate 639, histidine 641, and glutamate 646.

It belongs to the SPARC family. In terms of processing, N- and O-glycosylated. O-glycosylated with a core 1 or possibly core 8 glycan. Highly expressed in lymph node, brain, heart, lung, skeletal muscle, ovary, small intestine, and colon, with lower levels in placenta, pancreas, testis, spleen, and thymus, and no expression in kidney, liver, and peripheral blood leukocytes.

The protein localises to the secreted. It localises to the extracellular space. Its subcellular location is the extracellular matrix. The sequence is that of SPARC-like protein 1 (SPARCL1) from Homo sapiens (Human).